The following is a 181-amino-acid chain: uncharacterized protein (181 aa).

It belongs to the methyltransferase superfamily.

This is an uncharacterized protein from Bacillus subtilis (strain 168).